The sequence spans 82 residues: RNA-binding protein GK0100 (82 aa).

The protein belongs to the eukaryotic ribosomal protein eL8 family.

The polypeptide is RNA-binding protein GK0100 (Geobacillus kaustophilus (strain HTA426)).